A 356-amino-acid polypeptide reads, in one-letter code: 5-formaminoimidazole-4-carboxamide-1-(beta)-D-ribofuranosyl 5'-monophosphate synthetase (356 aa).

Residues His-27 and Ser-94 each coordinate 5-amino-1-(5-phospho-beta-D-ribosyl)imidazole-4-carboxamide. In terms of domain architecture, ATP-grasp spans 101-333 (TENFADMAVP…YADLMEENLS (233 aa)). ATP contacts are provided by residues 145 to 196 (PHDI…TRYY) and Glu-226. Asn-255 is a 5-amino-1-(5-phospho-beta-D-ribosyl)imidazole-4-carboxamide binding site. The Mg(2+) site is built by Glu-293 and Glu-306.

The protein belongs to the phosphohexose mutase family. Requires Mg(2+) as cofactor. It depends on Mn(2+) as a cofactor.

The enzyme catalyses 5-amino-1-(5-phospho-beta-D-ribosyl)imidazole-4-carboxamide + formate + ATP = 5-formamido-1-(5-phospho-D-ribosyl)imidazole-4-carboxamide + ADP + phosphate. It participates in purine metabolism; IMP biosynthesis via de novo pathway; 5-formamido-1-(5-phospho-D-ribosyl)imidazole-4-carboxamide from 5-amino-1-(5-phospho-D-ribosyl)imidazole-4-carboxamide (formate route): step 1/1. Its function is as follows. Catalyzes the ATP- and formate-dependent formylation of 5-aminoimidazole-4-carboxamide-1-beta-d-ribofuranosyl 5'-monophosphate (AICAR) to 5-formaminoimidazole-4-carboxamide-1-beta-d-ribofuranosyl 5'-monophosphate (FAICAR) in the absence of folates. The chain is 5-formaminoimidazole-4-carboxamide-1-(beta)-D-ribofuranosyl 5'-monophosphate synthetase from Methanosarcina barkeri (strain Fusaro / DSM 804).